The chain runs to 215 residues: Probable phosphoglycerate mutase GpmB (215 aa).

Substrate contacts are provided by residues 8–15 (RHGETVWN), 21–22 (QG), R58, 82–85 (ELNM), and 151–152 (GM). The active-site Tele-phosphohistidine intermediate is H9. The active-site Proton donor/acceptor is the E82.

Belongs to the phosphoglycerate mutase family. GpmB subfamily.

It catalyses the reaction (2R)-2-phosphoglycerate = (2R)-3-phosphoglycerate. The protein operates within carbohydrate degradation; glycolysis; pyruvate from D-glyceraldehyde 3-phosphate: step 3/5. This Yersinia enterocolitica serotype O:8 / biotype 1B (strain NCTC 13174 / 8081) protein is Probable phosphoglycerate mutase GpmB.